The primary structure comprises 139 residues: Putative pre-16S rRNA nuclease (139 aa).

This sequence belongs to the YqgF nuclease family.

The protein resides in the cytoplasm. In terms of biological role, could be a nuclease involved in processing of the 5'-end of pre-16S rRNA. This Haemophilus influenzae (strain 86-028NP) protein is Putative pre-16S rRNA nuclease.